Here is a 363-residue protein sequence, read N- to C-terminus: Alanine racemase (363 aa).

Lys34 acts as the Proton acceptor; specific for D-alanine in catalysis. Lys34 carries the post-translational modification N6-(pyridoxal phosphate)lysine. Arg129 provides a ligand contact to substrate. Residue Tyr256 is the Proton acceptor; specific for L-alanine of the active site. Met304 contacts substrate.

The protein belongs to the alanine racemase family. Pyridoxal 5'-phosphate is required as a cofactor.

It catalyses the reaction L-alanine = D-alanine. The protein operates within amino-acid biosynthesis; D-alanine biosynthesis; D-alanine from L-alanine: step 1/1. Functionally, catalyzes the interconversion of L-alanine and D-alanine. May also act on other amino acids. This is Alanine racemase (alr) from Edwardsiella ictaluri (strain 93-146).